A 415-amino-acid polypeptide reads, in one-letter code: Beta-2 adrenergic receptor (415 aa).

Residues 1–34 (MGQPANRSVFLLAPNGSHAPDQGDSQERSEAWVV) lie on the Extracellular side of the membrane. 2 N-linked (GlcNAc...) asparagine glycosylation sites follow: Asn6 and Asn15. Residues 35–58 (GMGIVMSLIVLAIVFGNVLVITAI) form a helical membrane-spanning segment. Topologically, residues 59–71 (ARFERLQTVTNYF) are cytoplasmic. A helical membrane pass occupies residues 72–95 (ITSLACADLVMGLAVVPFGASHIL). Residues 96 to 106 (MKMWTFGNFWC) lie on the Extracellular side of the membrane. Cystine bridges form between Cys106/Cys191 and Cys184/Cys190. A helical membrane pass occupies residues 107-129 (EFWTSIDVLCVTASIETLCVIAV). At 130–150 (DRYFAITSPFKYQSLLTKNKA) the chain is on the cytoplasmic side. Tyr141 is modified (phosphotyrosine). Residues 151-174 (RVVILMVWIVSGLTSFLPIQMHWY) traverse the membrane as a helical segment. Residues 175–196 (RATHQEAINCYAKETCCDFFTN) lie on the Extracellular side of the membrane. Residues 197–220 (QAYAIASSIVSFYLPLVVMVFVYS) traverse the membrane as a helical segment. Topologically, residues 221–274 (RVFQVAQRQLQKIDRSEGRFHAQNLSQVEQDGRSGHGHRRSSKFCLKEHKALKT) are cytoplasmic. Ser246 bears the Phosphoserine mark. Ser261 and Ser262 each carry phosphoserine; by PKA. Cys265 carries the S-palmitoyl cysteine lipid modification. A helical transmembrane segment spans residues 275–298 (LGIIMGTFTLCWLPFFIVNIVHVI). Topologically, residues 299–305 (QDNLIPK) are extracellular. Residues 306–329 (EVYILLNWVGYVNSAFNPLIYCRS) form a helical membrane-spanning segment. Topologically, residues 330 to 415 (PDFRIAFQEL…RNCSTNDSLL (86 aa)) are cytoplasmic. Cys341 is lipidated: S-palmitoyl cysteine. A phosphoserine; by PKA mark is found at Ser345 and Ser346. Ser355 is modified (phosphoserine; by BARK). The segment at 379-415 (SELLCEDPPGTEDRQGTVPSDSVDSQGRNCSTNDSLL) is disordered. 4-hydroxyproline is present on residues Pro387 and Pro397. Positions 395-415 (TVPSDSVDSQGRNCSTNDSLL) are enriched in polar residues. Positions 412-415 (DSLL) match the PDZ-binding motif.

This sequence belongs to the G-protein coupled receptor 1 family. Adrenergic receptor subfamily. ADRB2 sub-subfamily. As to quaternary structure, binds NHERF1 and GPRASP1. Interacts with ARRB1 and ARRB2. Interacts with SRC. Interacts with USP20 and USP33. Interacts with VHL; the interaction, which is increased on hydroxylation of ADRB2, ubiquitinates ADRB2 leading to its degradation. Interacts with EGLN3; the interaction hydroxylates ADRB2 facilitating VHL-E3 ligase-mediated ubiquitination. Interacts (via PDZ-binding motif) with SNX27 (via PDZ domain); the interaction is required when endocytosed to prevent degradation in lysosomes and promote recycling to the plasma membrane. Interacts with CNIH4. Interacts with ARRDC3. Interacts with NEDD4. Interacts with MARCHF2. In terms of processing, palmitoylated; may reduce accessibility of Ser-345 and Ser-346 by anchoring Cys-341 to the plasma membrane. Agonist stimulation promotes depalmitoylation and further allows Ser-345 and Ser-346 phosphorylation. Post-translationally, phosphorylated by PKA and BARK upon agonist stimulation, which mediates homologous desensitization of the receptor. PKA-mediated phosphorylation seems to facilitate phosphorylation by BARK. Phosphorylation of Tyr-141 is induced by insulin and leads to supersensitization of the receptor. In terms of processing, polyubiquitinated. Agonist-induced ubiquitination leads to sort internalized receptors to the lysosomes for degradation. Deubiquitination by USP20 and USP33, leads to ADRB2 recycling and resensitization after prolonged agonist stimulation. USP20 and USP33 are constitutively associated and are dissociated immediately after agonist stimulation. Ubiquitination by the VHL-E3 ligase complex is oxygen-dependent. Post-translationally, hydroxylation by EGLN3 occurs only under normoxia and increases the interaction with VHL and the subsequent ubiquitination and degradation of ADRB2. Palmitoylated. Mainly palmitoylated at Cys-341. Palmitoylation may reduce accessibility of phosphorylation sites by anchoring the receptor to the plasma membrane. Agonist stimulation promotes depalmitoylation and further allows Ser-345 and Ser-346 phosphorylation. Also undergoes transient, ligand-induced palmitoylation at Cys-265 probably by ZDHHC9, ZDHHC14 and ZDHHC18 within the Golgi. Palmitoylation at Cys-265 requires phosphorylation by PKA and receptor internalization and stabilizes the receptor. Could be depalmitoylated by LYPLA1 at the plasma membrane.

The protein resides in the cell membrane. It is found in the early endosome. Its subcellular location is the golgi apparatus. Its function is as follows. Beta-adrenergic receptors mediate the catecholamine-induced activation of adenylate cyclase through the action of G proteins. The beta-2-adrenergic receptor binds epinephrine with an approximately 30-fold greater affinity than it does norepinephrine. This Canis lupus familiaris (Dog) protein is Beta-2 adrenergic receptor (ADRB2).